A 430-amino-acid chain; its full sequence is Keratin, type I cytoskeletal 18 (430 aa).

Position 2 is an N-acetylserine (Ser-2). Positions 2–79 (SFTTRSTFST…GLAGMGGIQN (78 aa)) are head. A phosphoserine mark is found at Ser-7, Ser-10, Ser-15, and Ser-18. A phosphoserine; alternate mark is found at Ser-30 and Ser-31. O-linked (GlcNAc) serine; alternate glycosylation is found at Ser-30 and Ser-31. Ser-34 carries the phosphoserine; by CDK1 modification. Tyr-36 carries the post-translational modification Phosphotyrosine. Position 42 is a phosphoserine (Ser-42). Arg-45 bears the Omega-N-methylarginine mark. Ser-49 bears the Phosphoserine; alternate mark. The O-linked (GlcNAc) serine; alternate glycan is linked to Ser-49. Ser-51 carries the post-translational modification Phosphoserine; by MAPKAPK2 and MAPKAPK3. Residue Thr-52 is modified to Phosphothreonine. Ser-53 is modified (phosphoserine; by CAMK, PKC/PRKCE and AURKA). Residue Arg-55 is modified to Omega-N-methylarginine. The residue at position 60 (Ser-60) is a Phosphoserine. Thr-65 is modified (phosphothreonine). The interval 70-373 (GLAGMGGIQN…EALLNIKVKL (304 aa)) is necessary for interaction with PNN. An interaction with TRADD region spans residues 77-128 (IQNEKETMQSLNDRLASYLDRVRSLETENRRLESKIREHLEKKGPQVRDWSH). A coil 1A region spans residues 80–115 (EKETMQSLNDRLASYLDRVRSLETENRRLESKIREH). Residues 80-391 (EKETMQSLND…RLLEDGEDFN (312 aa)) enclose the IF rod domain. A Glycyl lysine isopeptide (Lys-Gly) (interchain with G-Cter in SUMO2) cross-link involves residue Lys-81. Ser-93 and Ser-100 each carry phosphoserine. The interval 116-132 (LEKKGPQVRDWSHYFKI) is linker 1. Lys-131 is modified (N6-acetyllysine). The tract at residues 133 to 224 (IEDLRAQIFA…KNHEEEVKGL (92 aa)) is coil 1B. Phosphoserine is present on Ser-177. Residues 225–248 (QAQIASSGLTVEVDAPKSQDLAKI) are linker 12. The interval 243-391 (QDLAKIMADI…RLLEDGEDFN (149 aa)) is interaction with DNAJB6. Lys-247 participates in a covalent cross-link: Glycyl lysine isopeptide (Lys-Gly) (interchain with G-Cter in SUMO2). The interval 249 to 387 (MADIRAQYDE…ATYRRLLEDG (139 aa)) is coil 2. At Thr-302 the chain carries Phosphothreonine. Residues Ser-305, Ser-319, and Ser-323 each carry the phosphoserine modification. Residues Lys-370 and Lys-372 each participate in a glycyl lysine isopeptide (Lys-Gly) (interchain with G-Cter in SUMO2) cross-link. The tract at residues 388–430 (EDFNLGDALDSSNSMQTIQKTTTRRIVDGKVVSETNDTKVLRH) is tail. Residues Ser-398, Ser-399, and Ser-401 each carry the phosphoserine modification. Thr-404 is modified (phosphothreonine). Lys-417 participates in a covalent cross-link: Glycyl lysine isopeptide (Lys-Gly) (interchain with G-Cter in SUMO2). Lys-426 bears the N6-acetyllysine; alternate mark. Lys-426 is covalently cross-linked (Glycyl lysine isopeptide (Lys-Gly) (interchain with G-Cter in SUMO1); alternate). Lys-426 participates in a covalent cross-link: Glycyl lysine isopeptide (Lys-Gly) (interchain with G-Cter in SUMO2); alternate.

The protein belongs to the intermediate filament family. In terms of assembly, heterotetramer of two type I and two type II keratins. KRT18 associates with KRT8. Interacts with PLEC isoform 1C, when in a heterodimer with KRT8. Interacts with the thrombin-antithrombin complex. Interacts with PNN and mutated CFTR. Interacts with YWHAE, YWHAH and YWHAZ only when phosphorylated. Interacts with DNAJB6, TCHP and TRADD. Interacts with FAM83H. Interacts with EPPK1. Interacts with PKP1 and PKP2. (Microbial infection) Interacts with hepatitis C virus/HCV core protein. Phosphorylation at Ser-34 increases during mitosis. Hyperphosphorylated at Ser-53 in diseased cirrhosis liver. Phosphorylation increases by IL-6. In terms of processing, proteolytically cleaved by caspases during epithelial cell apoptosis. Cleavage occurs at Asp-238 by either caspase-3, caspase-6 or caspase-7. Post-translationally, O-GlcNAcylation increases solubility, and decreases stability by inducing proteasomal degradation. Expressed in colon, placenta, liver and very weakly in exocervix. Increased expression observed in lymph nodes of breast carcinoma.

The protein localises to the nucleus matrix. The protein resides in the cytoplasm. Its subcellular location is the perinuclear region. It is found in the nucleus. It localises to the nucleolus. Functionally, involved in the uptake of thrombin-antithrombin complexes by hepatic cells. When phosphorylated, plays a role in filament reorganization. Involved in the delivery of mutated CFTR to the plasma membrane. Together with KRT8, is involved in interleukin-6 (IL-6)-mediated barrier protection. The chain is Keratin, type I cytoskeletal 18 (KRT18) from Homo sapiens (Human).